The following is a 378-amino-acid chain: Ribosomal RNA large subunit methyltransferase G (378 aa).

It belongs to the methyltransferase superfamily. RlmG family.

It localises to the cytoplasm. The catalysed reaction is guanosine(1835) in 23S rRNA + S-adenosyl-L-methionine = N(2)-methylguanosine(1835) in 23S rRNA + S-adenosyl-L-homocysteine + H(+). In terms of biological role, specifically methylates the guanine in position 1835 (m2G1835) of 23S rRNA. This chain is Ribosomal RNA large subunit methyltransferase G, found in Citrobacter koseri (strain ATCC BAA-895 / CDC 4225-83 / SGSC4696).